The following is a 557-amino-acid chain: Carotenoid-cleaving dioxygenase, mitochondrial (557 aa).

4 residues coordinate Fe cation: His203, His263, His334, and His551.

Belongs to the carotenoid oxygenase family. Requires Fe(2+) as cofactor.

Its subcellular location is the mitochondrion. It carries out the reaction all-trans-beta-carotene + O2 = beta-ionone + all-trans-10'-apo-beta-carotenal. It catalyses the reaction 5-cis-lycopene + O2 = 5-cis-10'-apo-lycopenal + (3E,5E)-6,10-dimethylundeca-3,5,9-trien-2-one. The enzyme catalyses 13-cis-lycopene + O2 = 13-cis-10'-apo-lycopenal + (3E,5E)-6,10-dimethylundeca-3,5,9-trien-2-one. The catalysed reaction is lutein + O2 = (3R,6R)-hydroxy-alpha-ionone + (3R)-3-hydroxy-10'-apo-beta-carotenal. It carries out the reaction lutein + O2 = (3R,6R)-3-hydroxy-10'-apo-alpha-carotenal + (3R)-hydroxy-beta-ionone. It catalyses the reaction all-trans-zeaxanthin + 2 O2 = 4,9-dimethyldodeca-2,4,6,8,10-pentaenedial + 2 (3R)-hydroxy-beta-ionone. The enzyme catalyses all-trans-zeaxanthin + O2 = (3R)-3-hydroxy-10'-apo-beta-carotenal + (3R)-hydroxy-beta-ionone. The catalysed reaction is beta-cryptoxanthin + O2 = all-trans-10'-apo-beta-carotenal + (3R)-hydroxy-beta-ionone. It carries out the reaction all-trans-10'-apo-beta-carotenal + O2 = beta-ionone + 4,9-dimethyldodeca-2,4,6,8,10-pentaenedial. It catalyses the reaction (3R)-3-hydroxy-10'-apo-beta-carotenal + O2 = 4,9-dimethyldodeca-2,4,6,8,10-pentaenedial + (3R)-hydroxy-beta-ionone. The enzyme catalyses (3R,6R)-3-hydroxy-10'-apo-alpha-carotenal + O2 = (3R,6R)-hydroxy-alpha-ionone + 4,9-dimethyldodeca-2,4,6,8,10-pentaenedial. Its function is as follows. Broad specificity mitochondrial dioxygenase that mediates the asymmetric oxidative cleavage of carotenoids. Cleaves carotenes (pure hydrocarbon carotenoids) such as all-trans-beta-carotene and lycopene as well as xanthophylls (oxygenated carotenoids) such as zeaxanthin, lutein and beta-cryptoxanthin at both the 9,10 and the 9',10' carbon-carbon double bond. Through its function in carotenoids metabolism regulates oxidative stress and the production of important signaling molecules. This Pongo abelii (Sumatran orangutan) protein is Carotenoid-cleaving dioxygenase, mitochondrial.